The chain runs to 223 residues: Sugar fermentation stimulation protein homolog (223 aa).

Belongs to the SfsA family.

The sequence is that of Sugar fermentation stimulation protein homolog from Thermosipho melanesiensis (strain DSM 12029 / CIP 104789 / BI429).